Here is a 160-residue protein sequence, read N- to C-terminus: Transcription elongation factor GreA (160 aa).

Residues 1–72 (MAEKTYPMTL…QISSLETKIR (72 aa)) adopt a coiled-coil conformation.

Belongs to the GreA/GreB family.

Functionally, necessary for efficient RNA polymerase transcription elongation past template-encoded arresting sites. The arresting sites in DNA have the property of trapping a certain fraction of elongating RNA polymerases that pass through, resulting in locked ternary complexes. Cleavage of the nascent transcript by cleavage factors such as GreA or GreB allows the resumption of elongation from the new 3'terminus. GreA releases sequences of 2 to 3 nucleotides. This Streptococcus sanguinis (strain SK36) protein is Transcription elongation factor GreA.